A 701-amino-acid polypeptide reads, in one-letter code: Protein mono-ADP-ribosyltransferase PARP12 (701 aa).

C3H1-type zinc fingers lie at residues 94–119, 150–179, and 180–202; these read LCRFMVYGACKFLRAGKNCRNSHSLT, WLLPEICQHYNKGDGPHGSCAFQKQCIKLH, and ICQYFLQGECKFGTSCKRSHDFS. Positions 234 to 268 are disordered; it reads KNKSSAPSRVPPLFVPQGTSERKDSSGSVSPNTLS. Ser258 carries the phosphoserine modification. A compositionally biased stretch (polar residues) spans 259–268; sequence SGSVSPNTLS. 2 consecutive C3H1-type zinc fingers follow at residues 270-297 and 271-296; these read EEGDQICLYHIRKSCSFQDKCHRVHFHL and EGDQICLYHIRKSCSFQDKCHRVHFH. 2 consecutive WWE domains span residues 298–361 and 364–458; these read PYRW…RLST and SVTK…KVCR. Cys474 bears the ADP-ribosylcysteine mark. A PARP catalytic domain is found at 484 to 698; it reads IPDYWDSSAL…ILLALGSLFS (215 aa). An ADP-ribosyl aspartic acid mark is found at Asp600 and Asp611.

It belongs to the ARTD/PARP family. Interacts with PARP11; this interaction plays a key role in zika virus suppression. Interacts with ISG15. Post-translationally, auto-mono-ADP-ribosylated. In terms of processing, phosphorylated by PRKD1.

Its subcellular location is the nucleus. The protein localises to the golgi apparatus. It is found in the trans-Golgi network. It localises to the cytoplasm. The protein resides in the stress granule. The catalysed reaction is L-aspartyl-[protein] + NAD(+) = 4-O-(ADP-D-ribosyl)-L-aspartyl-[protein] + nicotinamide. The enzyme catalyses L-cysteinyl-[protein] + NAD(+) = S-(ADP-D-ribosyl)-L-cysteinyl-[protein] + nicotinamide + H(+). Mono-ADP-ribosyltransferase that mediates mono-ADP-ribosylation of target proteins. Acts as an antiviral factor by cooperating with PARP11 to suppress Zika virus replication. Displays anti-alphavirus activity during IFN-gamma immune activation by directly ADP-ribosylating the alphaviral non-structural proteins nsP3 and nsP4. Acts as a component of the PRKD1-driven regulatory cascade that selectively controls a major branch of the basolateral transport pathway by catalyzing the MARylation of GOLGA1. Acts also as a key regulator of mitochondrial function, protein translation, and inflammation. Inhibits PINK1/Parkin-dependent mitophagy and promotes cartilage degeneration by inhibiting the ubiquitination and SUMOylation of MFN1/2 by upregulating ISG15 and ISGylation. The polypeptide is Protein mono-ADP-ribosyltransferase PARP12 (Homo sapiens (Human)).